The chain runs to 86 residues: Small ribosomal subunit protein bS20 (86 aa).

It belongs to the bacterial ribosomal protein bS20 family.

Functionally, binds directly to 16S ribosomal RNA. In Aliarcobacter butzleri (strain RM4018) (Arcobacter butzleri), this protein is Small ribosomal subunit protein bS20.